Consider the following 294-residue polypeptide: ATP synthase gamma chain (294 aa).

The protein belongs to the ATPase gamma chain family. As to quaternary structure, F-type ATPases have 2 components, CF(1) - the catalytic core - and CF(0) - the membrane proton channel. CF(1) has five subunits: alpha(3), beta(3), gamma(1), delta(1), epsilon(1). CF(0) has three main subunits: a, b and c.

Its subcellular location is the cell inner membrane. Its function is as follows. Produces ATP from ADP in the presence of a proton gradient across the membrane. The gamma chain is believed to be important in regulating ATPase activity and the flow of protons through the CF(0) complex. In Campylobacter lari (strain RM2100 / D67 / ATCC BAA-1060), this protein is ATP synthase gamma chain.